Consider the following 407-residue polypeptide: Substance-P receptor (407 aa).

Residues 1–31 (MDNVLPVDSDLSPNISTNTSEPNQFVQPAWQ) are Extracellular-facing. Asn14 and Asn18 each carry an N-linked (GlcNAc...) asparagine glycan. A helical transmembrane segment spans residues 32 to 54 (IVLWAAAYTVIVVTSVVGNVVVM). The Cytoplasmic segment spans residues 55-64 (WIILAHKRMR). A helical membrane pass occupies residues 65-86 (TVTNYFLVNLAFAEASMAAFNT). Topologically, residues 87-106 (VVNFTYAVHNEWYYGLFYCK) are extracellular. Cysteines 105 and 180 form a disulfide. Residues 107-128 (FHNFFPIAAVFASIYSMTAVAF) form a helical membrane-spanning segment. The Cytoplasmic portion of the chain corresponds to 129 to 148 (DRYMAIIHPLQPRLSATATK). A helical transmembrane segment spans residues 149-169 (VVICVIWVLALLLAFPQGYYS). The Extracellular portion of the chain corresponds to 170 to 194 (TTETMPSRVVCMIEWPEHPNKIYEK). The chain crosses the membrane as a helical span at residues 195–219 (VYHICVTVLIYFLPLLVIGYAYTVV). His197 provides a ligand contact to CP-96345. At 220–248 (GITLWASEIPGDSSDRYHEQVSAKRKVVK) the chain is on the cytoplasmic side. Residues 249-270 (MMIVVVCTFAICWLPFHIFFLL) traverse the membrane as a helical segment. Over 271–283 (PYINPDLYLKKFI) the chain is Extracellular. Residues 284–308 (QQVYLAIMWLAMSSTMYNPIIYCCL) traverse the membrane as a helical segment. Over 309-407 (NDRFRLGFKH…SFSFSSNVLS (99 aa)) the chain is Cytoplasmic. Cys322 is lipidated: S-palmitoyl cysteine. The segment at 364–407 (AHEEEPEDGPKATPSSLDLTSNCSSRSDSKTMTESFSFSSNVLS) is disordered. Positions 376–407 (TPSSLDLTSNCSSRSDSKTMTESFSFSSNVLS) are enriched in polar residues.

This sequence belongs to the G-protein coupled receptor 1 family. Interacts with ARRB1.

Its subcellular location is the cell membrane. Functionally, this is a receptor for the tachykinin neuropeptide substance P. It is probably associated with G proteins that activate a phosphatidylinositol-calcium second messenger system. The rank order of affinity of this receptor to tachykinins is: substance P &gt; substance K &gt; neuromedin-K. This Homo sapiens (Human) protein is Substance-P receptor (TACR1).